The primary structure comprises 162 residues: Selenoprotein F (162 aa).

Positions 1 to 28 (MAAGQGGWLRPALGLRLLLATAFQAVSA) are cleaved as a signal peptide. A non-standard amino acid (selenocysteine) is located at residue Sec93.

It belongs to the selenoprotein M/F family. Forms a tight complex with UGGT1/UGCGL1. Interacts with UGGT2/UGCGL2. Interacts with RDH11. Highest levels in prostate, lower levels in brain, lung, thyroid gland, and large intestine.

The protein resides in the endoplasmic reticulum lumen. Its function is as follows. May be involved in redox reactions associated with the formation of disulfide bonds. May contribute to the quality control of protein folding in the endoplasmic reticulum. May regulate protein folding by enhancing the catalytic activity of UGGT1/UGCGL1 and UGGT2/UGCGL2. The polypeptide is Selenoprotein F (Rattus norvegicus (Rat)).